Reading from the N-terminus, the 904-residue chain is Phosphoenolpyruvate carboxylase (904 aa).

Residues 52-71 (ISRRESDAPPSTLSEQLTGR) form a disordered region. Residues 60–70 (PPSTLSEQLTG) are compositionally biased toward polar residues. Residues His-151 and Lys-570 contribute to the active site.

This sequence belongs to the PEPCase type 1 family. It depends on Mg(2+) as a cofactor.

It catalyses the reaction oxaloacetate + phosphate = phosphoenolpyruvate + hydrogencarbonate. In terms of biological role, forms oxaloacetate, a four-carbon dicarboxylic acid source for the tricarboxylic acid cycle. This Xanthomonas euvesicatoria pv. vesicatoria (strain 85-10) (Xanthomonas campestris pv. vesicatoria) protein is Phosphoenolpyruvate carboxylase.